The sequence spans 61 residues: Photosystem II reaction center X protein (61 aa).

A helical membrane pass occupies residues 26–46 (IGSFIAAALLIVIPATAFLIF).

This sequence belongs to the PsbX family. Type 2 subfamily. In terms of assembly, PSII consists of a core antenna complex that captures photons, and an electron transfer chain that converts photonic excitation into a charge separation. PSII forms dimeric complexes.

It is found in the cellular thylakoid membrane. In terms of biological role, involved in the binding and/or turnover of quinones at the Q(B) site of Photosystem II. This chain is Photosystem II reaction center X protein, found in Prochlorococcus marinus (strain MIT 9301).